Consider the following 715-residue polypeptide: Fatty acid oxidation complex subunit alpha (715 aa).

An enoyl-CoA hydratase/isomerase region spans residues 1-190 (MIYQGKAITV…KVGAVDAVVA (190 aa)). Asp-297 lines the substrate pocket. The 3-hydroxyacyl-CoA dehydrogenase stretch occupies residues 312-715 (HDAKQAAVLG…MAKNGQRFFN (404 aa)). NAD(+) contacts are provided by residues Met-325, Asp-344, 401–403 (VVE), Lys-408, and Ser-430. His-451 serves as the catalytic For 3-hydroxyacyl-CoA dehydrogenase activity. NAD(+) is bound at residue Asn-454. Residues Asn-501 and Tyr-660 each coordinate substrate.

This sequence in the N-terminal section; belongs to the enoyl-CoA hydratase/isomerase family. The protein in the C-terminal section; belongs to the 3-hydroxyacyl-CoA dehydrogenase family. As to quaternary structure, heterotetramer of two alpha chains (FadB) and two beta chains (FadA).

The enzyme catalyses a (3S)-3-hydroxyacyl-CoA + NAD(+) = a 3-oxoacyl-CoA + NADH + H(+). It catalyses the reaction a (3S)-3-hydroxyacyl-CoA = a (2E)-enoyl-CoA + H2O. It carries out the reaction a 4-saturated-(3S)-3-hydroxyacyl-CoA = a (3E)-enoyl-CoA + H2O. The catalysed reaction is (3S)-3-hydroxybutanoyl-CoA = (3R)-3-hydroxybutanoyl-CoA. The enzyme catalyses a (3Z)-enoyl-CoA = a 4-saturated (2E)-enoyl-CoA. It catalyses the reaction a (3E)-enoyl-CoA = a 4-saturated (2E)-enoyl-CoA. The protein operates within lipid metabolism; fatty acid beta-oxidation. Functionally, involved in the aerobic and anaerobic degradation of long-chain fatty acids via beta-oxidation cycle. Catalyzes the formation of 3-oxoacyl-CoA from enoyl-CoA via L-3-hydroxyacyl-CoA. It can also use D-3-hydroxyacyl-CoA and cis-3-enoyl-CoA as substrate. This Ectopseudomonas oleovorans (Pseudomonas oleovorans) protein is Fatty acid oxidation complex subunit alpha.